Here is a 389-residue protein sequence, read N- to C-terminus: Alpha-2B adrenergic receptor (389 aa).

The chain crosses the membrane as a helical span at residues Ala1 to Leu25. Residues Thr26–Leu36 are Cytoplasmic-facing. A helical transmembrane segment spans residues Phe37 to Leu62. The Extracellular portion of the chain corresponds to Gly63–Cys72. Cys72 and Cys151 form a disulfide bridge. The helical transmembrane segment at Glu73–Leu95 threads the bilayer. At Asp96–Lys117 the chain is on the cytoplasmic side. Residues Cys118–Asp140 form a helical membrane-spanning segment. Over Gln141 to Glu156 the chain is Extracellular. Residues Ala157–Leu180 traverse the membrane as a helical segment. Topologically, residues Arg181 to Val353 are cytoplasmic. Disordered regions lie at residues Arg192–Leu218 and Asp231–Gln310. Residues Ala234 to Ser249 show a composition bias toward basic and acidic residues. Residues Leu354 to Ile377 traverse the membrane as a helical segment. Topologically, residues Cys378–His386 are extracellular. Residues Gly387–Phe389 traverse the membrane as a helical segment.

Belongs to the G-protein coupled receptor 1 family. Adrenergic receptor subfamily. ADRA2B sub-subfamily. In terms of assembly, interacts with RAB26. Interacts with PPP1R9B.

It localises to the cell membrane. Functionally, alpha-2 adrenergic receptors mediate the catecholamine-induced inhibition of adenylate cyclase through the action of G proteins. The polypeptide is Alpha-2B adrenergic receptor (ADRA2B) (Procavia capensis habessinica (Abyssinian hyrax)).